The sequence spans 258 residues: MPDMQTSRDTRKIPISKVGVKDISYPIVVMDKNRKFQQTVARVNMYVDLPHHFKGTHMSRFIEILNAYREDIALDKMEPILQEMKKKLGASSAHLEIEFPYFIEKRAPVSGARSLMEYTCTFTGTLAETFDFVLGVQVPVTSLCPCSKELSRYGAHNQRSHITVRVRYAGFVWIEELVELIEGCGSSPVWSLLKRADEKFVTERAYENPKFVEDIVREATLALAAHEAITWFSVEAENFESIHKHSAYAAIEQDKRKA.

The protein belongs to the GTP cyclohydrolase IV family.

It carries out the reaction GTP + H2O = 7,8-dihydroneopterin 3'-triphosphate + formate + H(+). The protein operates within cofactor biosynthesis; 7,8-dihydroneopterin triphosphate biosynthesis; 7,8-dihydroneopterin triphosphate from GTP: step 1/1. Converts GTP to 7,8-dihydroneopterin triphosphate. This is GTP cyclohydrolase FolE2 from Geobacter sulfurreducens (strain ATCC 51573 / DSM 12127 / PCA).